A 156-amino-acid chain; its full sequence is Arginine repressor (156 aa).

The protein belongs to the ArgR family.

The protein localises to the cytoplasm. It participates in amino-acid biosynthesis; L-arginine biosynthesis [regulation]. Functionally, regulates arginine biosynthesis genes. The polypeptide is Arginine repressor (Shigella boydii serotype 18 (strain CDC 3083-94 / BS512)).